A 113-amino-acid polypeptide reads, in one-letter code: Ribosome-binding factor A (113 aa).

This sequence belongs to the RbfA family. Monomer. Binds 30S ribosomal subunits, but not 50S ribosomal subunits or 70S ribosomes.

It localises to the cytoplasm. One of several proteins that assist in the late maturation steps of the functional core of the 30S ribosomal subunit. Associates with free 30S ribosomal subunits (but not with 30S subunits that are part of 70S ribosomes or polysomes). Required for efficient processing of 16S rRNA. May interact with the 5'-terminal helix region of 16S rRNA. The protein is Ribosome-binding factor A of Oceanobacillus iheyensis (strain DSM 14371 / CIP 107618 / JCM 11309 / KCTC 3954 / HTE831).